Consider the following 330-residue polypeptide: Catharanthine synthase (330 aa).

Positions 81-83 (HGA) match the Involved in the stabilization of the negatively charged intermediate by the formation of the oxyanion hole motif. G84 is a binding site for catharanthine. S173 serves as the catalytic Proton acceptor. D274 is a catalytic residue. A catharanthine-binding site is contributed by Y305. The active-site Proton donor/acceptor is Y305.

Belongs to the 'GDXG' lipolytic enzyme family. Interacts with dehydroprecondylocarpine acetate synthase (DPAS). As to expression, expressed in leaf epidermis.

It is found in the cytoplasm. The protein localises to the cytosol. It localises to the nucleus. It carries out the reaction dehydrosecodine = catharanthine. It participates in alkaloid biosynthesis. Its function is as follows. Component of iboga and aspidosperma monoterpenoid indole alkaloids (MIAs, e.g. tabersonine and catharanthine) biosynthesis pathway from 19E-geissoschizine, psychoactive compounds likely to be used in the treatment of opioid dependence. Catalyzes the conversion of dehydrosecodine to catharanthine. In Catharanthus roseus (Madagascar periwinkle), this protein is Catharanthine synthase.